A 209-amino-acid polypeptide reads, in one-letter code: Kynurenine formamidase (209 aa).

F18 is a binding site for substrate. Residues H48, H52, and D54 each coordinate Zn(2+). H58 serves as the catalytic Proton donor/acceptor. The Zn(2+) site is built by H160 and E172.

Belongs to the Cyclase 1 superfamily. KynB family. Homodimer. Zn(2+) is required as a cofactor.

It catalyses the reaction N-formyl-L-kynurenine + H2O = L-kynurenine + formate + H(+). The protein operates within amino-acid degradation; L-tryptophan degradation via kynurenine pathway; L-kynurenine from L-tryptophan: step 2/2. Functionally, catalyzes the hydrolysis of N-formyl-L-kynurenine to L-kynurenine, the second step in the kynurenine pathway of tryptophan degradation. In Bordetella petrii (strain ATCC BAA-461 / DSM 12804 / CCUG 43448), this protein is Kynurenine formamidase.